We begin with the raw amino-acid sequence, 200 residues long: UPF0316 protein SAUSA300_1892 (200 aa).

3 helical membrane passes run 8–28 (PWLMVLTIFIINICYVTFLTM), 40–60 (IAASVSFLEVLVYIVGLGLVM), and 66–86 (IQNIIAYAFGFSIGIIVGMKI).

This sequence belongs to the UPF0316 family.

The protein localises to the cell membrane. The protein is UPF0316 protein SAUSA300_1892 of Staphylococcus aureus (strain USA300).